The following is a 315-amino-acid chain: Glutamine synthetase nodule isozyme (315 aa).

The GS beta-grasp domain occupies 19 to 99; that stretch reads IIAEYIWVGG…VICDTYTPSG (81 aa). The region spanning 106-315 is the GS catalytic domain; that stretch reads KRHAAAKIFS…WGVANRGASI (210 aa).

Belongs to the glutamine synthetase family. In terms of assembly, homooctamer.

Its subcellular location is the cytoplasm. The enzyme catalyses L-glutamate + NH4(+) + ATP = L-glutamine + ADP + phosphate + H(+). In Lupinus angustifolius (Narrow-leaved blue lupine), this protein is Glutamine synthetase nodule isozyme.